The sequence spans 567 residues: Dihydroxy-acid dehydratase 2 (567 aa).

C56 serves as a coordination point for [2Fe-2S] cluster. Residue D88 coordinates Mg(2+). C129 serves as a coordination point for [2Fe-2S] cluster. Positions 130 and 131 each coordinate Mg(2+). An N6-carboxylysine modification is found at K131. C206 lines the [2Fe-2S] cluster pocket. E457 serves as a coordination point for Mg(2+). Catalysis depends on S483, which acts as the Proton acceptor.

Belongs to the IlvD/Edd family. In terms of assembly, homodimer. Requires [2Fe-2S] cluster as cofactor. Mg(2+) serves as cofactor.

It carries out the reaction (2R)-2,3-dihydroxy-3-methylbutanoate = 3-methyl-2-oxobutanoate + H2O. The enzyme catalyses (2R,3R)-2,3-dihydroxy-3-methylpentanoate = (S)-3-methyl-2-oxopentanoate + H2O. Its pathway is amino-acid biosynthesis; L-isoleucine biosynthesis; L-isoleucine from 2-oxobutanoate: step 3/4. The protein operates within amino-acid biosynthesis; L-valine biosynthesis; L-valine from pyruvate: step 3/4. Its function is as follows. Functions in the biosynthesis of branched-chain amino acids. Catalyzes the dehydration of (2R,3R)-2,3-dihydroxy-3-methylpentanoate (2,3-dihydroxy-3-methylvalerate) into 2-oxo-3-methylpentanoate (2-oxo-3-methylvalerate) and of (2R)-2,3-dihydroxy-3-methylbutanoate (2,3-dihydroxyisovalerate) into 2-oxo-3-methylbutanoate (2-oxoisovalerate), the penultimate precursor to L-isoleucine and L-valine, respectively. The sequence is that of Dihydroxy-acid dehydratase 2 from Corynebacterium efficiens (strain DSM 44549 / YS-314 / AJ 12310 / JCM 11189 / NBRC 100395).